The sequence spans 447 residues: MTTILKHLPAGQRIGIAFSGGLDTSAALLWMRQKGAVPYAYTANLGQPDEDDYDAIPRRAMEYGAENARLIDCRKQLVAEGIAAIQCGAFHNTTGGLTYFNTTPLGRAVTGTMLVAAMKEDGVNIWGDGSTYKGNDIERFYRYGLLTNAELQIYKPWLDTDFIDELGGRHEMSEFMIACGFDYKMSVEKAYSTDSNMLGATHEAKDLEFLNSSVKIVNPIMGVKFWDESVKIPAEEVTVRFEQGHPVALNGKTFSDDVEMMLEANRIGGRHGLGMSDQIENRIIEAKSRGIYEAPGMALLHIAYERLLTGIHNEDTIEQYHSHGRQLGKLLYLGRWFDSQALMLRDGLQRWVASQITGEVTLELRRGNDYSILNTVSDNLTYKAERLTMEKGESVFSPDDRIGQLTMRNLDITDTREKLFGYAKAGLLTASSATGLPQVENLENKGK.

ATP-binding positions include 17–25 (AFSGGLDTS) and Ala43. Tyr99 lines the L-citrulline pocket. The ATP site is built by Gly129 and Thr131. Residues Thr131, Asn135, and Asp136 each coordinate L-aspartate. Asn135 contributes to the L-citrulline binding site. An ATP-binding site is contributed by Asp136. L-citrulline-binding residues include Arg139 and Ser192. Asp194 provides a ligand contact to ATP. Thr201, Glu203, and Glu280 together coordinate L-citrulline.

This sequence belongs to the argininosuccinate synthase family. Type 2 subfamily. In terms of assembly, homotetramer.

It is found in the cytoplasm. The catalysed reaction is L-citrulline + L-aspartate + ATP = 2-(N(omega)-L-arginino)succinate + AMP + diphosphate + H(+). It participates in amino-acid biosynthesis; L-arginine biosynthesis; L-arginine from L-ornithine and carbamoyl phosphate: step 2/3. The protein is Argininosuccinate synthase of Salmonella dublin (strain CT_02021853).